The sequence spans 118 residues: MNALNQAHCEACRADAPKVTDEELAELIREIPDWNIEVRDGHMELERVFLFKNFKHALAFTNAVGEIAEAEGHHPGLLTEWGKVTVTWWSHSIKGLHRNDFIMCARTDKVAETAEGRK.

Belongs to the pterin-4-alpha-carbinolamine dehydratase family.

It catalyses the reaction (4aS,6R)-4a-hydroxy-L-erythro-5,6,7,8-tetrahydrobiopterin = (6R)-L-erythro-6,7-dihydrobiopterin + H2O. This Pseudomonas putida (strain ATCC 700007 / DSM 6899 / JCM 31910 / BCRC 17059 / LMG 24140 / F1) protein is Putative pterin-4-alpha-carbinolamine dehydratase.